The sequence spans 658 residues: UvrABC system protein B (658 aa).

The region spanning 25–414 is the Helicase ATP-binding domain; the sequence is KSLKNNNHYQ…LSKKNVAEQI (390 aa). 38–45 lines the ATP pocket; that stretch reads GVTGSGKT. The short motif at 91–114 is the Beta-hairpin element; it reads HFDYYQPESYIPRRDLFIEKDSSI. In terms of domain architecture, Helicase C-terminal spans 433 to 607; it reads QVQDLFDEIK…ELKLRDDEIR (175 aa). The 36-residue stretch at 623–658 folds into the UVR domain; it reads EKIIKELDKKMRECTKNLDFEEAMRLRDEIAQLRTL.

This sequence belongs to the UvrB family. Forms a heterotetramer with UvrA during the search for lesions. Interacts with UvrC in an incision complex.

It is found in the cytoplasm. In terms of biological role, the UvrABC repair system catalyzes the recognition and processing of DNA lesions. A damage recognition complex composed of 2 UvrA and 2 UvrB subunits scans DNA for abnormalities. Upon binding of the UvrA(2)B(2) complex to a putative damaged site, the DNA wraps around one UvrB monomer. DNA wrap is dependent on ATP binding by UvrB and probably causes local melting of the DNA helix, facilitating insertion of UvrB beta-hairpin between the DNA strands. Then UvrB probes one DNA strand for the presence of a lesion. If a lesion is found the UvrA subunits dissociate and the UvrB-DNA preincision complex is formed. This complex is subsequently bound by UvrC and the second UvrB is released. If no lesion is found, the DNA wraps around the other UvrB subunit that will check the other stand for damage. The polypeptide is UvrABC system protein B (Helicobacter pylori (strain ATCC 700392 / 26695) (Campylobacter pylori)).